Here is a 449-residue protein sequence, read N- to C-terminus: Chromosomal replication initiator protein DnaA (449 aa).

A domain I, interacts with DnaA modulators region spans residues 1–73 (MTQNPQWLWQ…TETIAELLQQ (73 aa)). Residues 73–109 (QPVKVRLTSPEGNTLAATQSFYSSRSGQSTRPGKKTP) are domain II. Polar residues predominate over residues 90–103 (TQSFYSSRSGQSTR). The tract at residues 90 to 110 (TQSFYSSRSGQSTRPGKKTPE) is disordered. The domain III, AAA+ region stretch occupies residues 110 to 326 (ELNSKYTFSR…GALLRAVTHI (217 aa)). ATP contacts are provided by Gly154, Gly156, Lys157, and Thr158. The interval 327–449 (AISGLPMTVE…DRINHHHQNL (123 aa)) is domain IV, binds dsDNA.

It belongs to the DnaA family. In terms of assembly, oligomerizes as a right-handed, spiral filament on DNA at oriC.

The protein resides in the cytoplasm. Its function is as follows. Plays an essential role in the initiation and regulation of chromosomal replication. ATP-DnaA binds to the origin of replication (oriC) to initiate formation of the DNA replication initiation complex once per cell cycle. Binds the DnaA box (a 9 base pair repeat at the origin) and separates the double-stranded (ds)DNA. Forms a right-handed helical filament on oriC DNA; dsDNA binds to the exterior of the filament while single-stranded (ss)DNA is stabiized in the filament's interior. The ATP-DnaA-oriC complex binds and stabilizes one strand of the AT-rich DNA unwinding element (DUE), permitting loading of DNA polymerase. After initiation quickly degrades to an ADP-DnaA complex that is not apt for DNA replication. Binds acidic phospholipids. This Picosynechococcus sp. (strain ATCC 27264 / PCC 7002 / PR-6) (Agmenellum quadruplicatum) protein is Chromosomal replication initiator protein DnaA.